Reading from the N-terminus, the 246-residue chain is UDP-N-acetyl-D-mannosaminuronic acid transferase (246 aa).

Belongs to the glycosyltransferase 26 family.

The catalysed reaction is UDP-N-acetyl-alpha-D-mannosaminouronate + N-acetyl-alpha-D-glucosaminyl-di-trans,octa-cis-undecaprenyl diphosphate = beta-D-ManNAcA-(1-&gt;4)-alpha-D-GlcNAc-di-trans,octa-cis-undecaprenyl diphosphate + UDP + H(+). Its pathway is bacterial outer membrane biogenesis; enterobacterial common antigen biosynthesis. In terms of biological role, catalyzes the synthesis of Und-PP-GlcNAc-ManNAcA (Lipid II), the second lipid-linked intermediate involved in enterobacterial common antigen (ECA) synthesis. The polypeptide is UDP-N-acetyl-D-mannosaminuronic acid transferase (Escherichia coli (strain K12)).